The following is a 29-amino-acid chain: Acidic phospholipase A2 Omo-E6 (29 aa).

Residues Tyr27 and Gly29 each coordinate Ca(2+).

Requires Ca(2+) as cofactor. In terms of tissue distribution, expressed by the venom gland.

Its subcellular location is the secreted. It carries out the reaction a 1,2-diacyl-sn-glycero-3-phosphocholine + H2O = a 1-acyl-sn-glycero-3-phosphocholine + a fatty acid + H(+). Functionally, snake venom phospholipase A2 (PLA2) that inhibits the ADP- and collagen-induced human platelet aggregation. Exhibits strong hydrolytic activities and prefers the anionic micelles (dPPC with deoxycholate) to the zwitterionic micelles (dPPC with Triton X-100). PLA2 catalyzes the calcium-dependent hydrolysis of the 2-acyl groups in 3-sn-phosphoglycerides. The polypeptide is Acidic phospholipase A2 Omo-E6 (Ovophis monticola (Chinese mountain pitviper)).